Reading from the N-terminus, the 242-residue chain is Phosphoribosylaminoimidazole-succinocarboxamide synthase (242 aa).

The protein belongs to the SAICAR synthetase family.

It carries out the reaction 5-amino-1-(5-phospho-D-ribosyl)imidazole-4-carboxylate + L-aspartate + ATP = (2S)-2-[5-amino-1-(5-phospho-beta-D-ribosyl)imidazole-4-carboxamido]succinate + ADP + phosphate + 2 H(+). Its pathway is purine metabolism; IMP biosynthesis via de novo pathway; 5-amino-1-(5-phospho-D-ribosyl)imidazole-4-carboxamide from 5-amino-1-(5-phospho-D-ribosyl)imidazole-4-carboxylate: step 1/2. This chain is Phosphoribosylaminoimidazole-succinocarboxamide synthase, found in Trichodesmium erythraeum (strain IMS101).